The sequence spans 78 residues: D-alanyl carrier protein (78 aa).

The Carrier domain maps to 1–78; sequence MNIQETVLNI…QIIQQVEALQ (78 aa). Ser36 carries the post-translational modification O-(pantetheine 4'-phosphoryl)serine.

Belongs to the DltC family. In terms of processing, 4'-phosphopantetheine is transferred from CoA to a specific serine of apo-DCP.

It localises to the cytoplasm. It functions in the pathway cell wall biogenesis; lipoteichoic acid biosynthesis. Functionally, carrier protein involved in the D-alanylation of lipoteichoic acid (LTA). The loading of thioester-linked D-alanine onto DltC is catalyzed by D-alanine--D-alanyl carrier protein ligase DltA. The DltC-carried D-alanyl group is further transferred to cell membrane phosphatidylglycerol (PG) by forming an ester bond, probably catalyzed by DltD. D-alanylation of LTA plays an important role in modulating the properties of the cell wall in Gram-positive bacteria, influencing the net charge of the cell wall. In Enterococcus faecalis (strain ATCC 700802 / V583), this protein is D-alanyl carrier protein.